Reading from the N-terminus, the 352-residue chain is MSLFGQATTSTVSNATGDLKKDVEVAQPPEDSISDLAFSPQAEYLAASSWDSKVRIYEVQATGQSIGKALYEHQGPVLSVNWSRDGTKVASGSVDKSAKVFDIQTGQNQQVAAHDDAVRCVRFVEAMGTSPILATGSWDKTLKYWDLRQSTPIATVSLPERVYAMDCVHPLLTVATAERNICVINLSEPTKIFKLAMSPLKFQTRSLACFIKGDGYAIGSVEGRCAIQNIDEKNASQNFSFRCHRNQAGNSADVYSVNSIAFHPQYGTFSTAGSDGTFSFWDKDSHQRLKSYPNVGGTISCSTFNRTGDIFAYAISYDWSKGYTFNNAQLPNKIMLHPVPQDEIKPRPKKGR.

WD repeat units follow at residues 28 to 58 (PPED…RIYE), 72 to 102 (EHQG…KVFD), 113 to 146 (AHDD…KYWD), 192 to 229 (IFKL…AIQN), and 252 to 282 (ADVY…SFWD).

This sequence belongs to the WD repeat rae1 family. Interacts with rpn15/dss1 and uap56.

The protein resides in the nucleus. Its function is as follows. Required for mitotic cell growth as well as for spore germination. Functions in cell cycle progression through trafficking of proteins required for mitosis. Has a role in the mRNA export process. This is Poly(A)+ RNA export protein (rae1) from Schizosaccharomyces pombe (strain 972 / ATCC 24843) (Fission yeast).